The primary structure comprises 127 residues: Protein ApaG (127 aa).

An ApaG domain is found at 3 to 127 (DDPRYRVEVE…FVLSVPRTLH (125 aa)).

This chain is Protein ApaG, found in Xanthomonas axonopodis pv. citri (strain 306).